Consider the following 282-residue polypeptide: Secretory carrier-associated membrane protein 1 (282 aa).

Residues Met1–Asp49 are disordered. Topologically, residues Met1–Gln117 are cytoplasmic. Positions Ala18–Leu30 are enriched in polar residues. Residue Ser31 is modified to Phosphoserine. Positions Leu48–Asn93 form a coiled coil. 4 consecutive transmembrane segments (helical) span residues Tyr118–Val138, Ile150–Tyr170, Phe185–Ala205, and Ile233–Ile253. Topologically, residues Gln254 to Leu282 are cytoplasmic.

It belongs to the SCAMP family.

It is found in the cell membrane. It localises to the cytoplasmic vesicle. Its subcellular location is the secretory vesicle membrane. In terms of biological role, probably involved in membrane trafficking. The sequence is that of Secretory carrier-associated membrane protein 1 (SCAMP1) from Arabidopsis thaliana (Mouse-ear cress).